A 512-amino-acid polypeptide reads, in one-letter code: Tyrosine decarboxylase (512 aa).

L-tyrosine-binding residues include Pro100, His205, and His320. At Lys321 the chain carries N6-(pyridoxal phosphate)lysine. Tyr350 is a binding site for L-tyrosine.

This sequence belongs to the group II decarboxylase family. As to quaternary structure, homodimer. Requires pyridoxal 5'-phosphate as cofactor. In terms of tissue distribution, mainly expressed in roots, stems and capsule walls.

The catalysed reaction is L-tyrosine + H(+) = tyramine + CO2. Functionally, tyrosine decarboxylase that converts tyrosine into tyramine, a precursor of isoquinoline alkaloids and various amides. In Papaver somniferum (Opium poppy), this protein is Tyrosine decarboxylase.